Consider the following 427-residue polypeptide: Glutamate-1-semialdehyde 2,1-aminomutase (427 aa).

Lys-265 is subject to N6-(pyridoxal phosphate)lysine.

It belongs to the class-III pyridoxal-phosphate-dependent aminotransferase family. HemL subfamily. As to quaternary structure, homodimer. Requires pyridoxal 5'-phosphate as cofactor.

It localises to the cytoplasm. The catalysed reaction is (S)-4-amino-5-oxopentanoate = 5-aminolevulinate. Its pathway is porphyrin-containing compound metabolism; protoporphyrin-IX biosynthesis; 5-aminolevulinate from L-glutamyl-tRNA(Glu): step 2/2. The protein is Glutamate-1-semialdehyde 2,1-aminomutase of Pseudomonas fluorescens (strain SBW25).